Here is a 305-residue protein sequence, read N- to C-terminus: Elongation factor Ts (305 aa).

Residues 79 to 82 are involved in Mg(2+) ion dislocation from EF-Tu; it reads TDFV.

The protein belongs to the EF-Ts family.

Its subcellular location is the cytoplasm. Associates with the EF-Tu.GDP complex and induces the exchange of GDP to GTP. It remains bound to the aminoacyl-tRNA.EF-Tu.GTP complex up to the GTP hydrolysis stage on the ribosome. This is Elongation factor Ts from Brucella suis biovar 1 (strain 1330).